Reading from the N-terminus, the 564-residue chain is Phenylalanine--tRNA ligase beta subunit (564 aa).

Residues 286-362 form the B5 domain; it reads YFQNTLEVSV…IGRGLDSFKP (77 aa). 4 residues coordinate Mg(2+): Asp-340, Asp-346, Glu-349, and Glu-350.

It belongs to the phenylalanyl-tRNA synthetase beta subunit family. Type 2 subfamily. As to quaternary structure, tetramer of two alpha and two beta subunits. It depends on Mg(2+) as a cofactor.

Its subcellular location is the cytoplasm. It catalyses the reaction tRNA(Phe) + L-phenylalanine + ATP = L-phenylalanyl-tRNA(Phe) + AMP + diphosphate + H(+). This Borrelia hermsii (strain HS1 / DAH) protein is Phenylalanine--tRNA ligase beta subunit.